A 215-amino-acid polypeptide reads, in one-letter code: Leucyl/phenylalanyl-tRNA--protein transferase (215 aa).

It belongs to the L/F-transferase family.

It localises to the cytoplasm. The enzyme catalyses N-terminal L-lysyl-[protein] + L-leucyl-tRNA(Leu) = N-terminal L-leucyl-L-lysyl-[protein] + tRNA(Leu) + H(+). It carries out the reaction N-terminal L-arginyl-[protein] + L-leucyl-tRNA(Leu) = N-terminal L-leucyl-L-arginyl-[protein] + tRNA(Leu) + H(+). The catalysed reaction is L-phenylalanyl-tRNA(Phe) + an N-terminal L-alpha-aminoacyl-[protein] = an N-terminal L-phenylalanyl-L-alpha-aminoacyl-[protein] + tRNA(Phe). In terms of biological role, functions in the N-end rule pathway of protein degradation where it conjugates Leu, Phe and, less efficiently, Met from aminoacyl-tRNAs to the N-termini of proteins containing an N-terminal arginine or lysine. This Campylobacter jejuni (strain RM1221) protein is Leucyl/phenylalanyl-tRNA--protein transferase.